The sequence spans 460 residues: Cyclin-A1-1 (460 aa).

2 disordered regions span residues 1–52 (MSNI…ITNQ) and 95–126 (PHKV…KSPQ). 2 stretches are compositionally biased toward low complexity: residues 10-19 (SSFSSSTKSS) and 100-111 (SSPSKSDDGSVS).

It belongs to the cyclin family. Cyclin AB subfamily. Interacts with FZR2/CCS52A1, FZR1/CCS52A2 and FZR3/CCS52B.

The protein is Cyclin-A1-1 (CYCA1-1) of Arabidopsis thaliana (Mouse-ear cress).